Reading from the N-terminus, the 746-residue chain is Dystrobrevin alpha (746 aa).

An interaction with MAGEE1 region spans residues 1–288; it reads MIEDSGKRGN…SHSNQHQMKE (288 aa). The ZZ-type zinc finger occupies 238 to 294; it reads FHPVECSYCHSESMMGFRYRCQQCHNYQLCQDCFWRGHAGGSHSNQHQMKEYTSWKS. Cys243, Cys246, Cys258, Cys261, Cys267, Cys270, His280, and His284 together coordinate Zn(2+). Positions 397–447 are syntrophin-binding region; the sequence is DRLADEHVLIGLYVNMLRNDPPCMLESSNRLDEEHRLIARYAARLAAESSS. A coiled-coil region spans residues 458–557; it reads DISFTIDANK…KLLKEEELKQ (100 aa). 3 disordered regions span residues 555-577, 646-667, and 684-721; these read LKQG…SRPI, ETES…APSP, and YIHG…VRQL. Positions 563 to 576 are enriched in low complexity; it reads SSPRSSPSHTISRP. Ser666 is subject to Phosphoserine.

The protein belongs to the dystrophin family. Dystrobrevin subfamily. As to quaternary structure, interacts with dystrophin, utrophin and the syntrophins SNTA1, SNTB1, SNTB2, SNTG1 and SNTG2. Binds dystrobrevin binding protein 1. Interacts with MAGEE1. Interacts with Ctnnal1. The interaction is required for correct localization of both Ctnnal1 and Dtna. In terms of assembly, does not interact with utrophin. Does not interact with syntrophin. Phosphorylation of isoform 2 on tyrosine kinase substrate domain present in the C-terminus. Expressed in skeletal muscle, heart, lung and brain. Sarcolemma and neuromuscular junction in skeletal muscle. Isoform 2 is restricted to the neuromuscular junction. Isoforms 5 and 6 are only expressed in muscle.

Its subcellular location is the cytoplasm. The protein resides in the synapse. The protein localises to the cell membrane. Involved in synapse maturation and required for normal muscle function. The polypeptide is Dystrobrevin alpha (Dtna) (Mus musculus (Mouse)).